A 235-amino-acid polypeptide reads, in one-letter code: Eukaryotic translation initiation factor 4E-1 (235 aa).

The interval 1–36 (MVVEETIKATSTEDLSNTIANQNPRGRGGDEDEELE) is disordered. Polar residues predominate over residues 8–24 (KATSTEDLSNTIANQNP). EIF4G-binding regions lie at residues 60–63 (HPLE) and 70–106 (FDNPSAKSKQATWGASIRPIYTFSTVEEFWSVYNNIH). MRNA-binding positions include 78 to 83 (KQATWG), Lys-110, and 128 to 129 (WE). Cysteines 133 and 171 form a disulfide. Positions 154–163 (YTLLAMIGEQ) are EIF4G-binding. Residues 178-183 (RSGQDK) and 223-227 (KKFDR) each bind mRNA.

Belongs to the eukaryotic initiation factor 4E family. In terms of assembly, EIF4F is a multi-subunit complex, the composition of which varies with external and internal environmental conditions. It is composed of at least EIF4A, EIF4E and EIF4G. EIF4E is also known to interact with other partners. In higher plants two isoforms of EIF4F have been identified, named isoform EIF4F and isoform EIF(iso)4F. Isoform EIF4F has subunits p220 and p26, whereas isoform EIF(iso)4F has subunits p82 and p28. (Microbial infection) Interacts with potyvirus viral genome-linked protein (VPg); this interaction is possible in susceptible hosts but impaired in resistant plants. In terms of processing, according to the redox status, the Cys-133-Cys-171 disulfide bridge may have a role in regulating protein function by affecting its ability to bind capped mRNA.

It localises to the nucleus. Its subcellular location is the cytoplasm. Its function is as follows. Component of the protein complex eIF4F, which is involved in the recognition of the mRNA cap, ATP-dependent unwinding of 5'-terminal secondary structure and recruitment of mRNA to the ribosome. Recognizes and binds the 7-methylguanosine-containing mRNA cap during an early step in the initiation of protein synthesis and facilitates ribosome binding by inducing the unwinding of the mRNAs secondary structures. Key component of recessive resistance to potyviruses. In terms of biological role, (Microbial infection) Susceptibility host factor required for viral infection by recruiting viral RNAs to the host ribosomal complex via an interaction with viral genome-linked protein (VPg). In Citrullus lanatus (Watermelon), this protein is Eukaryotic translation initiation factor 4E-1.